The primary structure comprises 296 residues: Polyamine aminopropyltransferase (296 aa).

A PABS domain is found at 5–238 (ELWYETLHAN…GIMTFAWATQ (234 aa)). Position 33 (Gln-33) interacts with S-methyl-5'-thioadenosine. Spermidine is bound by residues His-64 and Asp-88. Residues Glu-108 and 140–141 (DG) each bind S-methyl-5'-thioadenosine. The Proton acceptor role is filled by Asp-158. A spermidine-binding site is contributed by 158-161 (DCTD). Pro-165 is an S-methyl-5'-thioadenosine binding site.

The protein belongs to the spermidine/spermine synthase family. As to quaternary structure, homodimer or homotetramer.

It localises to the cytoplasm. The catalysed reaction is S-adenosyl 3-(methylsulfanyl)propylamine + putrescine = S-methyl-5'-thioadenosine + spermidine + H(+). The protein operates within amine and polyamine biosynthesis; spermidine biosynthesis; spermidine from putrescine: step 1/1. In terms of biological role, catalyzes the irreversible transfer of a propylamine group from the amino donor S-adenosylmethioninamine (decarboxy-AdoMet) to putrescine (1,4-diaminobutane) to yield spermidine. In Yersinia pestis bv. Antiqua (strain Antiqua), this protein is Polyamine aminopropyltransferase.